A 398-amino-acid chain; its full sequence is Chalcone synthase 1 (398 aa).

Residue Lys-58 to Lys-65 coordinates CoA. Cys-167 functions as the Acyl-thioester intermediate in the catalytic mechanism. Residues Thr-200 and Gly-219–Asp-220 each bind substrate. Residue Ala-311 coordinates CoA.

This sequence belongs to the thiolase-like superfamily. Chalcone/stilbene synthases family. In terms of assembly, homodimer.

It carries out the reaction (E)-4-coumaroyl-CoA + 3 malonyl-CoA + 3 H(+) = 2',4,4',6'-tetrahydroxychalcone + 3 CO2 + 4 CoA. It functions in the pathway secondary metabolite biosynthesis; flavonoid biosynthesis. In terms of biological role, the primary product of this enzyme is 4,2',4',6'-tetrahydroxychalcone (also termed naringenin-chalcone or chalcone) which can under specific conditions spontaneously isomerize into naringenin. The sequence is that of Chalcone synthase 1 (CHS1) from Oryza sativa subsp. japonica (Rice).